Here is a 433-residue protein sequence, read N- to C-terminus: Serine/threonine-protein kinase toxin HipA (433 aa).

A Phosphoserine; by autocatalysis modification is found at S147. Residues 151–154 (VQPK), K178, and 220–222 (ERF) contribute to the ATP site. D306 functions as the Proton acceptor in the catalytic mechanism. ATP-binding positions include 308 to 311 (HGKN) and 327 to 328 (YD). DNA-binding regions lie at residues 380 to 384 (RIARR) and R429.

Belongs to the HipA Ser/Thr kinase family. As to quaternary structure, monomer. Forms a HipA(2)HipB(2)-DNA complex with cognate antitoxin HipB; has higher affinity for the latter when HipB is prebound to DNA and HipA is phosphorylated. Binds DNA in the ternary complex.

The enzyme catalyses L-seryl-[protein] + ATP = O-phospho-L-seryl-[protein] + ADP + H(+). The catalysed reaction is L-threonyl-[protein] + ATP = O-phospho-L-threonyl-[protein] + ADP + H(+). Functionally, toxic component of a type II toxin-antitoxin (TA) system; overexpression in wild-type temporarily inhibits cell growth, overexpression in a hipAB deletion leads to acute growth inhibition. The toxic effect of HipA is neutralized by its cognate antitoxin HipB. In the ternary phosphoserine-HipA-HipB-DNA complex the DNA is bent about 125 degrees; all HipA in the crystallized ternary complex is phosphorylated. In E.coli phosphorylation of HipA is thought to release HipB from the HipA-HipB-DNA complex, suggesting the complex functions differently in the 2 bacteria. Phosphorylates Glu-tRNA-ligase (GltX, on 'Ser-239') in vivo, with HipB probably acts as a corepressor for transcription of the hipBA promoter. The protein is Serine/threonine-protein kinase toxin HipA of Shewanella oneidensis (strain ATCC 700550 / JCM 31522 / CIP 106686 / LMG 19005 / NCIMB 14063 / MR-1).